Consider the following 215-residue polypeptide: uncharacterized protein (215 aa).

The next 6 membrane-spanning stretches (helical) occupy residues 3-23, 30-50, 59-79, 87-107, 122-142, and 156-176; these read LLAY…LRSI, ANLL…GLTW, LGLS…LRFW, WGTY…AICV, VSTC…SNIY, and VLFG…LIYV.

It belongs to the major facilitator superfamily. Allantoate permease family.

It is found in the membrane. This is an uncharacterized protein from Saccharomyces cerevisiae (strain ATCC 204508 / S288c) (Baker's yeast).